The following is a 263-amino-acid chain: Proteasome subunit alpha type-1 (263 aa).

An N-acetylmethionine modification is found at Met-1. Ser-110 bears the Phosphoserine; alternate mark. Residue Ser-110 is glycosylated (O-linked (GlcNAc) serine; alternate). Residue Lys-115 forms a Glycyl lysine isopeptide (Lys-Gly) (interchain with G-Cter in ubiquitin) linkage. Phosphoserine is present on Ser-177. Lys-208 participates in a covalent cross-link: Glycyl lysine isopeptide (Lys-Gly) (interchain with G-Cter in ubiquitin). The interval 232 to 263 (FLEGLEERPQRKAQPAQPADEPAEKADEPMEH) is disordered. Basic and acidic residues predominate over residues 253–263 (PAEKADEPMEH).

The protein belongs to the peptidase T1A family. The 26S proteasome consists of a 20S proteasome core and two 19S regulatory subunits. The 20S proteasome core is a barrel-shaped complex made of 28 subunits that are arranged in four stacked rings. The two outer rings are each formed by seven alpha subunits, and the two inner rings are formed by seven beta subunits. The proteolytic activity is exerted by three beta-subunits PSMB5, PSMB6 and PSMB7. Interacts with NOTCH3. Interacts with ZFAND1.

It localises to the cytoplasm. Its subcellular location is the nucleus. Component of the 20S core proteasome complex involved in the proteolytic degradation of most intracellular proteins. This complex plays numerous essential roles within the cell by associating with different regulatory particles. Associated with two 19S regulatory particles, forms the 26S proteasome and thus participates in the ATP-dependent degradation of ubiquitinated proteins. The 26S proteasome plays a key role in the maintenance of protein homeostasis by removing misfolded or damaged proteins that could impair cellular functions, and by removing proteins whose functions are no longer required. Associated with the PA200 or PA28, the 20S proteasome mediates ubiquitin-independent protein degradation. This type of proteolysis is required in several pathways including spermatogenesis (20S-PA200 complex) or generation of a subset of MHC class I-presented antigenic peptides (20S-PA28 complex). This is Proteasome subunit alpha type-1 from Homo sapiens (Human).